We begin with the raw amino-acid sequence, 609 residues long: tRNA uridine 5-carboxymethylaminomethyl modification enzyme MnmG (609 aa).

Residues 11–16 (GAGHAG), V123, and T178 contribute to the FAD site. Residue 270 to 284 (GPRYCPSIEDKVVRF) participates in NAD(+) binding. Q367 serves as a coordination point for FAD.

It belongs to the MnmG family. Homodimer. Heterotetramer of two MnmE and two MnmG subunits. Requires FAD as cofactor.

The protein resides in the cytoplasm. Functionally, NAD-binding protein involved in the addition of a carboxymethylaminomethyl (cmnm) group at the wobble position (U34) of certain tRNAs, forming tRNA-cmnm(5)s(2)U34. This Mycoplasmopsis synoviae (strain 53) (Mycoplasma synoviae) protein is tRNA uridine 5-carboxymethylaminomethyl modification enzyme MnmG.